An 801-amino-acid polypeptide reads, in one-letter code: Protein SDA1 homolog (801 aa).

Disordered regions lie at residues 1-40 (MGKVSKSPGKGEKRIGKVGKKNGKSNAPTEGSNSGKASRF), 495-517 (RKDRGKPQEKDDEDEEYNGFARP), 536-647 (GEQG…SKNS), and 739-801 (DYKF…RKPQ). Positions 24-40 (KSNAPTEGSNSGKASRF) are enriched in polar residues. Composition is skewed to acidic residues over residues 544-568 (DGTDSELDVSDVDTDDVDTDDDADE) and 583-633 (NDAE…EASE). 2 stretches are compositionally biased toward basic residues: residues 770 to 779 (NKIRGRNRQR) and 787 to 801 (SLRHYLMRQSGRKPQ).

Belongs to the SDA1 family.

Its subcellular location is the nucleus. In terms of biological role, required for 60S pre-ribosomal subunits export to the cytoplasm. Required for normal somatic gonad development and for regulation of germline development and proliferation. The sequence is that of Protein SDA1 homolog (pro-3) from Caenorhabditis elegans.